Here is a 251-residue protein sequence, read N- to C-terminus: Hydroxyacylglutathione hydrolase (251 aa).

Zn(2+) is bound by residues His53, His55, Asp57, His58, His110, Asp127, and His165.

Belongs to the metallo-beta-lactamase superfamily. Glyoxalase II family. As to quaternary structure, monomer. It depends on Zn(2+) as a cofactor.

It catalyses the reaction an S-(2-hydroxyacyl)glutathione + H2O = a 2-hydroxy carboxylate + glutathione + H(+). The protein operates within secondary metabolite metabolism; methylglyoxal degradation; (R)-lactate from methylglyoxal: step 2/2. Functionally, thiolesterase that catalyzes the hydrolysis of S-D-lactoyl-glutathione to form glutathione and D-lactic acid. This chain is Hydroxyacylglutathione hydrolase, found in Klebsiella pneumoniae subsp. pneumoniae (strain ATCC 700721 / MGH 78578).